A 285-amino-acid polypeptide reads, in one-letter code: UPF0173 metal-dependent hydrolase Pnuc_1524 (285 aa).

Belongs to the UPF0173 family.

The sequence is that of UPF0173 metal-dependent hydrolase Pnuc_1524 from Polynucleobacter asymbioticus (strain DSM 18221 / CIP 109841 / QLW-P1DMWA-1) (Polynucleobacter necessarius subsp. asymbioticus).